Here is a 430-residue protein sequence, read N- to C-terminus: Adenylosuccinate synthetase (430 aa).

GTP-binding positions include 13 to 19 and 41 to 43; these read GDEGKGK and GHT. D14 serves as the catalytic Proton acceptor. Residues D14 and G41 each contribute to the Mg(2+) site. Residues 14–17, 39–42, T130, R144, Q225, T240, and R304 each bind IMP; these read DEGK and NAGH. Residue H42 is the Proton donor of the active site. 300–306 contributes to the substrate binding site; that stretch reads ATTGRAR. Residues R306, 332-334, and 414-416 each bind GTP; these read KLD and STG.

Belongs to the adenylosuccinate synthetase family. As to quaternary structure, homodimer. Mg(2+) serves as cofactor.

The protein localises to the cytoplasm. It carries out the reaction IMP + L-aspartate + GTP = N(6)-(1,2-dicarboxyethyl)-AMP + GDP + phosphate + 2 H(+). It functions in the pathway purine metabolism; AMP biosynthesis via de novo pathway; AMP from IMP: step 1/2. In terms of biological role, plays an important role in the de novo pathway of purine nucleotide biosynthesis. Catalyzes the first committed step in the biosynthesis of AMP from IMP. The chain is Adenylosuccinate synthetase from Pseudomonas fluorescens (strain ATCC BAA-477 / NRRL B-23932 / Pf-5).